Consider the following 180-residue polypeptide: ATP-dependent protease subunit HslV (180 aa).

Residue T5 is part of the active site. The Na(+) site is built by G161, C164, and T167.

This sequence belongs to the peptidase T1B family. HslV subfamily. A double ring-shaped homohexamer of HslV is capped on each side by a ring-shaped HslU homohexamer. The assembly of the HslU/HslV complex is dependent on binding of ATP.

The protein resides in the cytoplasm. The enzyme catalyses ATP-dependent cleavage of peptide bonds with broad specificity.. Allosterically activated by HslU binding. Its function is as follows. Protease subunit of a proteasome-like degradation complex believed to be a general protein degrading machinery. This is ATP-dependent protease subunit HslV from Campylobacter lari (strain RM2100 / D67 / ATCC BAA-1060).